A 1026-amino-acid chain; its full sequence is Multidrug resistance protein MdtC (1026 aa).

Transmembrane regions (helical) follow at residues 16 to 36 (LLAL…PVAP), 333 to 353 (EVEQ…FLFL), 360 to 380 (LIPA…IYLC), 387 to 407 (LSLM…IVVL), 435 to 455 (VFSI…MGGI), 459 to 479 (LFHE…LIAL), 528 to 548 (WVLL…ISIP), 853 to 873 (LLLI…LYES), 897 to 917 (LFNA…IGLV), 953 to 973 (PILM…FSYG), and 984 to 1004 (ITIV…TPVV).

The protein belongs to the resistance-nodulation-cell division (RND) (TC 2.A.6) family. MdtC subfamily. In terms of assembly, part of a tripartite efflux system composed of MdtA, MdtB and MdtC. MdtC forms a heteromultimer with MdtB.

Its subcellular location is the cell inner membrane. The sequence is that of Multidrug resistance protein MdtC from Edwardsiella ictaluri (strain 93-146).